Reading from the N-terminus, the 1388-residue chain is DNA-directed RNA polymerase subunit beta (1388 aa).

Belongs to the RNA polymerase beta chain family. As to quaternary structure, the RNAP catalytic core consists of 2 alpha, 1 beta, 1 beta' and 1 omega subunit. When a sigma factor is associated with the core the holoenzyme is formed, which can initiate transcription.

It catalyses the reaction RNA(n) + a ribonucleoside 5'-triphosphate = RNA(n+1) + diphosphate. Its function is as follows. DNA-dependent RNA polymerase catalyzes the transcription of DNA into RNA using the four ribonucleoside triphosphates as substrates. This Xylella fastidiosa (strain 9a5c) protein is DNA-directed RNA polymerase subunit beta.